Reading from the N-terminus, the 445-residue chain is Glutamate-1-semialdehyde 2,1-aminomutase (445 aa).

The residue at position 263 (Lys263) is an N6-(pyridoxal phosphate)lysine.

It belongs to the class-III pyridoxal-phosphate-dependent aminotransferase family. HemL subfamily. It depends on pyridoxal 5'-phosphate as a cofactor.

It localises to the cytoplasm. It catalyses the reaction (S)-4-amino-5-oxopentanoate = 5-aminolevulinate. It participates in porphyrin-containing compound metabolism; protoporphyrin-IX biosynthesis; 5-aminolevulinate from L-glutamyl-tRNA(Glu): step 2/2. This is Glutamate-1-semialdehyde 2,1-aminomutase from Haloarcula marismortui (strain ATCC 43049 / DSM 3752 / JCM 8966 / VKM B-1809) (Halobacterium marismortui).